Here is a 275-residue protein sequence, read N- to C-terminus: Expansin-A23 (275 aa).

A signal peptide spans 1-27; sequence MNLLGKMIYVEGFMMIMATLLVSMSYG. Residues 72-182 form the Expansin-like EG45 domain; it reads QGACGYGDLF…RRISCARTGG (111 aa). Residues 192-271 form the Expansin-like CBD domain; it reads YFLMILPYNV…NWGFGQTFDG (80 aa).

Belongs to the expansin family. Expansin A subfamily.

It localises to the secreted. The protein localises to the cell wall. Its subcellular location is the membrane. Causes loosening and extension of plant cell walls by disrupting non-covalent bonding between cellulose microfibrils and matrix glucans. No enzymatic activity has been found. In Arabidopsis thaliana (Mouse-ear cress), this protein is Expansin-A23 (EXPA23).